We begin with the raw amino-acid sequence, 559 residues long: S-layer protein (559 aa).

An N-terminal signal peptide occupies residues 1 to 28 (MAMSLKKIGAIAVGGAMVASALASGVMA). N-linked (GlcNAc...) asparagine glycans are attached at residues N108, N130, N155, N222, and N373.

It belongs to the Mj S-layer protein family.

The protein localises to the secreted. It localises to the cell wall. Its subcellular location is the S-layer. S-layer protein. The S-layer is a paracrystalline mono-layered assembly of proteins which coat the surface of the cell. The chain is S-layer protein from Methanothermococcus thermolithotrophicus (Methanococcus thermolithotrophicus).